Consider the following 283-residue polypeptide: Probable endonuclease 4 (283 aa).

Zn(2+) contacts are provided by His69, His109, Glu145, Asp179, His182, His216, Asp229, His231, and Glu261.

The protein belongs to the AP endonuclease 2 family. Zn(2+) is required as a cofactor.

It carries out the reaction Endonucleolytic cleavage to 5'-phosphooligonucleotide end-products.. Functionally, endonuclease IV plays a role in DNA repair. It cleaves phosphodiester bonds at apurinic or apyrimidinic (AP) sites, generating a 3'-hydroxyl group and a 5'-terminal sugar phosphate. This chain is Probable endonuclease 4, found in Campylobacter concisus (strain 13826).